The sequence spans 772 residues: Endoplasmic reticulum membrane sensor NFE2L1 (772 aa).

Residues 7–24 (YLTEGLLQFTILLSLIGV) form a helical; Signal-anchor for type II membrane protein membrane-spanning segment. A disordered region spans residues 108–148 (DPEGSVSGSQPNSGLALESSSGLQDVTGPDNGVRESETEQG). Polar residues predominate over residues 113-131 (VSGSQPNSGLALESSSGLQ). The tract at residues 191–199 (VFDYSHRQK) is cholesterol recognition/amino acid consensus (CRAC) region. N-linked (GlcNAc...) asparagine glycans are attached at residues N348 and N360. The CPD stretch occupies residues 379 to 383 (SPEVE). N412 and N423 each carry an N-linked (GlcNAc...) asparagine glycan. Disordered regions lie at residues 470–532 (EEEF…DSET) and 582–613 (SALDSADLPPPSALKKGSKEKQADFLDKQMSR). The short motif at 476 to 480 (DSGLS) is the Destruction motif element. Residues 476–523 (DSGLSLDSSHSPSSLSSSEGSSSSSSSSSSSSSSASSSASSSFSEEGA) are compositionally biased toward low complexity. Residue S528 is modified to Phosphoserine; by CK2. Positions 598 to 613 (GSKEKQADFLDKQMSR) are enriched in basic and acidic residues. S599 is modified (phosphoserine; by PKA). Residues 654–717 (LIRDIRRRGK…RQMKQKVQSL (64 aa)) enclose the bZIP domain. A basic motif region spans residues 656 to 675 (RDIRRRGKNKMAAQNCRKRK). Residues 682 to 696 (LERDVEDLQRDKARL) are leucine-zipper.

This sequence belongs to the bZIP family. CNC subfamily. In terms of assembly, interacts with KEAP1. Interacts (via CPD region) with FBXW7; leading to its ubiquitination and degradation. Interacts with SYVN1/HRD1; leading to its ubiquitination and degradation. Interacts (when ubiquitinated) with DDI2; leading to its cleavage. As to quaternary structure, interacts (via the bZIP domain) with small MAF protein (MAFF, MAFG or MAFK); required for binding to antioxidant response elements (AREs) on DNA. Interacts (via Destruction motif) with BTRC; leading to its ubiquitination and degradation. Interacts with CEBPB; the heterodimer represses expression of DSPP during odontoblast differentiation. Interacts with MOTS-c, a peptide produced by the mitochondrially encoded 12S rRNA MT-RNR1. Post-translationally, cleaved at Leu-104 by the aspartyl protease DDI2 following retrotranslocation, releasing the protein from the endoplasmic reticulum membrane and forming the transcription factor NRF1 that translocates into the nucleus. Ubiquitination is prerequisite for cleavage by aspartyl protease DDI2. N-glycosylated in normal conditions, when it has a single-pass type II membrane protein topology, with the DNA-binding domain facing the endoplasmic reticulum lumen. Deglycosylated during retrotranslocation to the cytosolic side of the membrane, to have a single-pass type III membrane protein topology with the major part of the protein facing the cytosol. In terms of processing, ubiquitinated by the SCF(FBXW7) complex and SYVN1/HRD1, leading to its degradation by the proteasome. Ubiquitinated during retrotranslocation to the cytosolic side of the membrane: ubiquitination does not lead to degradation and is required for processing by the aspartyl protease DDI2 and subsequent release from the endoplasmic reticulum membrane. Post-translationally, phosphorylation by CK2 at Ser-528 inhibits transcription factor activity, possibly by affecting DNA-binding activity. Phosphorylation at Ser-599 is required for interaction with CEBPB. Ubiquitinated by the SCF(BTRC) complex in the nucleus, leading to its degradation by the proteasome.

It localises to the endoplasmic reticulum membrane. The protein localises to the nucleus. Functionally, endoplasmic reticulum membrane sensor that translocates into the nucleus in response to various stresses to act as a transcription factor. Constitutes a precursor of the transcription factor NRF1. Able to detect various cellular stresses, such as cholesterol excess, oxidative stress or proteasome inhibition. In response to stress, it is released from the endoplasmic reticulum membrane following cleavage by the protease DDI2 and translocates into the nucleus to form the transcription factor NRF1. Acts as a key sensor of cholesterol excess: in excess cholesterol conditions, the endoplasmic reticulum membrane form of the protein directly binds cholesterol via its CRAC motif, preventing cleavage and release of the transcription factor NRF1, thereby allowing expression of genes promoting cholesterol removal, such as CD36. Involved in proteasome homeostasis: in response to proteasome inhibition, it is released from the endoplasmic reticulum membrane, translocates to the nucleus and activates expression of genes encoding proteasome subunits. CNC-type bZIP family transcription factor that translocates to the nucleus and regulates expression of target genes in response to various stresses. Heterodimerizes with small-Maf proteins (MAFF, MAFG or MAFK) and binds DNA motifs including the antioxidant response elements (AREs), which regulate expression of genes involved in oxidative stress response. Activates or represses expression of target genes, depending on the context. Plays a key role in cholesterol homeostasis by acting as a sensor of cholesterol excess: in low cholesterol conditions, translocates into the nucleus and represses expression of genes involved in defense against cholesterol excess, such as CD36. In excess cholesterol conditions, the endoplasmic reticulum membrane form of the protein directly binds cholesterol via its CRAC motif, preventing cleavage and release of the transcription factor NRF1, thereby allowing expression of genes promoting cholesterol removal. Critical for redox balance in response to oxidative stress: acts by binding the AREs motifs on promoters and mediating activation of oxidative stress response genes, such as GCLC, GCLM, GSS, MT1 and MT2. Plays an essential role during fetal liver hematopoiesis: probably has a protective function against oxidative stress and is involved in lipid homeostasis in the liver. Involved in proteasome homeostasis: in response to proteasome inhibition, mediates the 'bounce-back' of proteasome subunits by translocating into the nucleus and activating expression of genes encoding proteasome subunits. Also involved in regulating glucose flux. Together with CEBPB; represses expression of DSPP during odontoblast differentiation. In response to ascorbic acid induction, activates expression of SP7/Osterix in osteoblasts. In Homo sapiens (Human), this protein is Endoplasmic reticulum membrane sensor NFE2L1 (NFE2L1).